A 246-amino-acid chain; its full sequence is tRNA pseudouridine synthase A (246 aa).

The active-site Nucleophile is the Asp-53. Substrate is bound at residue Tyr-111.

The protein belongs to the tRNA pseudouridine synthase TruA family. In terms of assembly, homodimer.

The catalysed reaction is uridine(38/39/40) in tRNA = pseudouridine(38/39/40) in tRNA. Its function is as follows. Formation of pseudouridine at positions 38, 39 and 40 in the anticodon stem and loop of transfer RNAs. The protein is tRNA pseudouridine synthase A of Lysinibacillus sphaericus (strain C3-41).